We begin with the raw amino-acid sequence, 129 residues long: uncharacterized protein (129 aa).

The first 24 residues, Met-1–Ala-24, serve as a signal peptide directing secretion. Transmembrane regions (helical) follow at residues Ile-38–Phe-58 and Ile-95–Leu-115.

It localises to the membrane. This is an uncharacterized protein from Saccharomyces cerevisiae (strain ATCC 204508 / S288c) (Baker's yeast).